Consider the following 344-residue polypeptide: Protein RecA (344 aa).

65 to 72 (GPESSGKT) serves as a coordination point for ATP. The segment covering 323–337 (ELREKFQPAEAPREA) has biased composition (basic and acidic residues). The segment at 323–344 (ELREKFQPAEAPREAGDDEDKE) is disordered.

This sequence belongs to the RecA family.

The protein resides in the cytoplasm. Can catalyze the hydrolysis of ATP in the presence of single-stranded DNA, the ATP-dependent uptake of single-stranded DNA by duplex DNA, and the ATP-dependent hybridization of homologous single-stranded DNAs. It interacts with LexA causing its activation and leading to its autocatalytic cleavage. In Xanthomonas euvesicatoria pv. vesicatoria (strain 85-10) (Xanthomonas campestris pv. vesicatoria), this protein is Protein RecA.